Consider the following 285-residue polypeptide: Pantothenate synthetase (285 aa).

Residue 33–40 coordinates ATP; the sequence is MGALHEGH. The active-site Proton donor is His-40. Gln-64 provides a ligand contact to (R)-pantoate. Residue Gln-64 participates in beta-alanine binding. 150–153 is a binding site for ATP; it reads GEKD. Gln-156 is a (R)-pantoate binding site. ATP contacts are provided by residues Ala-179 and 187 to 190; that span reads LSSR.

This sequence belongs to the pantothenate synthetase family. As to quaternary structure, homodimer.

Its subcellular location is the cytoplasm. It catalyses the reaction (R)-pantoate + beta-alanine + ATP = (R)-pantothenate + AMP + diphosphate + H(+). It participates in cofactor biosynthesis; (R)-pantothenate biosynthesis; (R)-pantothenate from (R)-pantoate and beta-alanine: step 1/1. Catalyzes the condensation of pantoate with beta-alanine in an ATP-dependent reaction via a pantoyl-adenylate intermediate. The polypeptide is Pantothenate synthetase (Caulobacter vibrioides (strain ATCC 19089 / CIP 103742 / CB 15) (Caulobacter crescentus)).